Reading from the N-terminus, the 376-residue chain is Glutamate 5-kinase (376 aa).

K15 is a binding site for ATP. Residues S56, D143, and N155 each coordinate substrate. 175–176 (SD) is a binding site for ATP. In terms of domain architecture, PUA spans 281–358 (KGTLTIDAGA…PDVMSILGIT (78 aa)).

The protein belongs to the glutamate 5-kinase family.

It localises to the cytoplasm. It catalyses the reaction L-glutamate + ATP = L-glutamyl 5-phosphate + ADP. The protein operates within amino-acid biosynthesis; L-proline biosynthesis; L-glutamate 5-semialdehyde from L-glutamate: step 1/2. Its function is as follows. Catalyzes the transfer of a phosphate group to glutamate to form L-glutamate 5-phosphate. The polypeptide is Glutamate 5-kinase (Rhodopseudomonas palustris (strain BisB18)).